The following is a 646-amino-acid chain: ATP-dependent rRNA helicase SPB4 (646 aa).

A Q motif motif is present at residues 15 to 43 (WGALTPSLAPWILDYLSSMGFEQPTPVQK). The region spanning 46–247 (FDIFRGNKDV…TVGLLYPHKI (202 aa)) is the Helicase ATP-binding domain. 59 to 66 (AVTGSGKT) lines the ATP pocket. The DEAD box signature appears at 195–198 (DEAD). A Helicase C-terminal domain is found at 284 to 434 (ALCQLLERLE…PLAKPPVSVT (151 aa)). Composition is skewed to basic and acidic residues over residues 539 to 548 (KKEKAAREAQ) and 566 to 581 (NEAW…VKAA). Residues 539 to 646 (KKEKAAREAQ…GGDEFEGFDD (108 aa)) form a disordered region. Residues 572–623 (KHEHEDVKAARREKKRRKREAQRLGDMTEPEREEQRKLDEMIAEVRRRNAEA) adopt a coiled-coil conformation. Basic residues predominate over residues 582-591 (RREKKRRKRE). Residues 600–621 (EPEREEQRKLDEMIAEVRRRNA) are compositionally biased toward basic and acidic residues. Over residues 622–631 (EAPTPAAQAA) the composition is skewed to low complexity.

This sequence belongs to the DEAD box helicase family. DDX55/SPB4 subfamily. In terms of assembly, component of pre-60S ribosomal complexes.

The protein resides in the nucleus. It is found in the nucleolus. It carries out the reaction ATP + H2O = ADP + phosphate + H(+). Functionally, ATP-binding RNA helicase involved in the biogenesis of 60S ribosomal subunits. Binds 90S pre-ribosomal particles and dissociates from pre-60S ribosomal particles after processing of 27SB pre-rRNA. Required for the normal formation of 18S rRNA through the processing of pre-rRNAs at sites A0, A1 and A2, and the normal formation of 25S and 5.8S rRNAs through the processing of pre-rRNAs at sites C1 and C2. The chain is ATP-dependent rRNA helicase SPB4 from Chaetomium globosum (strain ATCC 6205 / CBS 148.51 / DSM 1962 / NBRC 6347 / NRRL 1970) (Soil fungus).